The chain runs to 1107 residues: OTU domain-containing protein 4 (1107 aa).

Met-1 carries the post-translational modification N-acetylmethionine. Positions 34–155 constitute an OTU domain; sequence LYRKLVAKDG…GNHYDIVYPI (122 aa). The interval 39 to 45 is cys-loop; that stretch reads VAKDGSC. The active site involves Asp-42. Cys-45 functions as the Nucleophile in the catalytic mechanism. The segment at 94–104 is variable-loop; the sequence is LENPQEWVGQV. Tyr-120 is subject to Phosphotyrosine. Residues Ser-126 and Ser-128 each carry the phosphoserine modification. Residue Thr-131 is modified to Phosphothreonine. The his-loop stretch occupies residues 143-148; sequence FSNGNH. The active site involves His-148. A phosphoserine mark is found at Ser-166, Ser-199, Ser-202, and Ser-204. Residues 195–206 show a composition bias toward acidic residues; sequence EESNSEISDSED. 2 disordered regions span residues 195 to 239 and 322 to 431; these read EESN…SADL and KHTP…DFDH. Positions 226 to 236 are enriched in polar residues; sequence GSENPKNNGNS. At Ser-340 the chain carries Phosphoserine. Over residues 392–403 the composition is skewed to low complexity; that stretch reads SSHSTGSQSQKS. Basic and acidic residues predominate over residues 419–431; it reads RKPDRERAEDFDH. Tyr-438 is modified (phosphotyrosine). Ser-442 is modified (phosphoserine). Tyr-459 is subject to Phosphotyrosine. Residues 470-568 are disordered; that stretch reads PALSSSSVSQ…KPAEHIPLSN (99 aa). Over residues 473-486 the composition is skewed to low complexity; the sequence is SSSSVSQSPSQNSN. Positions 495-528 are enriched in basic and acidic residues; the sequence is HARDRKGSMRRADAEERKDKDSLRGHTHVDKKPE. Residues Ser-544 and Ser-895 each carry the phosphoserine modification. The segment at 918-1107 is disordered; sequence LSAASVSSKH…MGDGHRGQHT (190 aa). Over residues 963 to 994 the composition is skewed to basic and acidic residues; that stretch reads NREREPGSAEPEPKRTIQSLKEKPEKVKDPKT. Phosphoserine occurs at positions 1000, 1005, 1016, and 1017. The span at 1032 to 1041 shows a compositional bias: polar residues; that stretch reads SKQFYNQTYG. Phosphoserine is present on Ser-1042. 2 stretches are compositionally biased toward basic and acidic residues: residues 1060 to 1079 and 1089 to 1107; these read VRGE…EGYQ and YRGD…GQHT.

As to quaternary structure, interacts with MYD88; the interaction is direct. Interacts with ALKBH3; the interaction is direct. Interacts with USP7; the interaction is direct. Interacts with USP9X; the interaction is direct. Post-translationally, phosphorylation at Ser-202 and Ser-204 activates 'Lys-63'-specific deubiquitinase activity. Induced upon stimulation with IL1B.

Its subcellular location is the cytoplasm. It localises to the nucleus. The catalysed reaction is Thiol-dependent hydrolysis of ester, thioester, amide, peptide and isopeptide bonds formed by the C-terminal Gly of ubiquitin (a 76-residue protein attached to proteins as an intracellular targeting signal).. With respect to regulation, phosphorylation on Ser-202 and Ser-204 induces 'Lys-63'-specific deubiquitinase activity. Functionally, deubiquitinase which hydrolyzes the isopeptide bond between the ubiquitin C-terminus and the lysine epsilon-amino group of the target protein. May negatively regulate inflammatory and pathogen recognition signaling in innate immune response. Upon phosphorylation at Ser-202 and Ser-204 residues, via IL-1 receptor and Toll-like receptor signaling pathway, specifically deubiquitinates 'Lys-63'-polyubiquitinated MYD88 adapter protein triggering down-regulation of NF-kappa-B-dependent transcription of inflammatory mediators. Independently of the catalytic activity, acts as a scaffold for alternative deubiquitinases to assemble specific deubiquitinase-substrate complexes. Associates with USP7 and USP9X deubiquitinases to stabilize alkylation repair enzyme ALKBH3, thereby promoting the repair of alkylated DNA lesions. In Mus musculus (Mouse), this protein is OTU domain-containing protein 4.